The primary structure comprises 425 residues: Glutamyl-tRNA reductase (425 aa).

Residues 49-52, Ser-107, 112-114, and Gln-118 each bind substrate; these read TCNR and EPQ. Cys-50 functions as the Nucleophile in the catalytic mechanism. Residue 187–192 participates in NADP(+) binding; that stretch reads GAGETI.

This sequence belongs to the glutamyl-tRNA reductase family. Homodimer.

It carries out the reaction (S)-4-amino-5-oxopentanoate + tRNA(Glu) + NADP(+) = L-glutamyl-tRNA(Glu) + NADPH + H(+). It functions in the pathway porphyrin-containing compound metabolism; protoporphyrin-IX biosynthesis; 5-aminolevulinate from L-glutamyl-tRNA(Glu): step 1/2. In terms of biological role, catalyzes the NADPH-dependent reduction of glutamyl-tRNA(Glu) to glutamate 1-semialdehyde (GSA). This is Glutamyl-tRNA reductase from Pseudomonas putida (strain W619).